The primary structure comprises 291 residues: Presqualene diphosphate synthase (291 aa).

Residues 1 to 23 (MTSAMKKIQPEAFSEKSSDSQAS) form a disordered region.

Belongs to the phytoene/squalene synthase family. HpnD subfamily.

It carries out the reaction 2 (2E,6E)-farnesyl diphosphate = presqualene diphosphate + diphosphate. It functions in the pathway secondary metabolite biosynthesis; hopanoid biosynthesis. In terms of biological role, involved in the biosynthesis of the hopanoid precursor squalene (SQ) from farnesyl diphosphate (FPP). Catalyzes the first step, the formation of presqualene diphosphate (PSPP) from two molecules of FPP. The sequence is that of Presqualene diphosphate synthase from Zymomonas mobilis subsp. mobilis (strain ATCC 31821 / ZM4 / CP4).